The sequence spans 93 residues: Parbolysin P5 (93 aa).

3 cysteine pairs are disulfide-bonded: Cys16–Cys37, Cys22–Cys33, and Cys47–Cys60.

This sequence belongs to the worm cytolysin family. As to expression, localized within the skin and proboscis and are most readily isolated from body mucus secretions.

Its subcellular location is the secreted. Its function is as follows. Cytolysin that shows hemolytic activity (on bovine erythrocytes, HC(50)=5.75 mg/ml). This hemolytic activity is completely inhibited by small unilamelar vesicles composed of PC/PG, PC/PI and PC/PS in 1:1 molar ratios (with at least 100 mg/ml concentration). This chain is Parbolysin P5, found in Parborlasia corrugatus (Antarctic nemertean worm).